Reading from the N-terminus, the 160-residue chain is UPF0178 protein PLES_56411 (160 aa).

This sequence belongs to the UPF0178 family.

The protein is UPF0178 protein PLES_56411 of Pseudomonas aeruginosa (strain LESB58).